We begin with the raw amino-acid sequence, 990 residues long: Serine/threonine-protein phosphatase 6 regulatory ankyrin repeat subunit B (990 aa).

ANK repeat units lie at residues 7-36, 40-69, 73-102, 106-135, 139-168, 172-201, 205-234, 238-267, 271-301, 305-334, 338-367, 371-400, 404-433, 437-466, 470-499, 531-560, 566-595, 599-628, 633-662, 666-695, 699-728, 732-761, 768-797, 800-829, 835-864, 868-898, 902-931, and 938-967; these read ADQP…DVNA, EKRT…RVNA, MWLT…DVNA, NWQT…SVNV, GGRT…NINA, KDRR…EVTC, KGYT…EIDE, YGNT…NVNQ, NGFT…DVNI, DGKS…EIDC, DGNT…DTAK, HNMF…EIDT, FGRT…DFNK, RGRT…NINE, WGRT…NAEE, EGYN…NMFE, ATKS…DLDI, KGRT…SVTV, TKRT…NPDV, KGQT…SVDA, LGCT…SILC, RGRT…SEED, QGYT…FRKF, NSFS…ASIV, KGRT…QVNA, AGKT…DLTL, DSNT…EQSL, and SLQT…CVLA.

In terms of assembly, protein phosphatase 6 (PP6) holoenzyme is proposed to be a heterotrimeric complex formed by the catalytic subunit, a SAPS domain-containing subunit (PP6R) and an ankyrin repeat-domain containing regulatory subunit (ARS).

In terms of biological role, putative regulatory subunit of protein phosphatase 6 (PP6) that may be involved in the recognition of phosphoprotein substrates. The chain is Serine/threonine-protein phosphatase 6 regulatory ankyrin repeat subunit B (ANKRD44) from Gallus gallus (Chicken).